The sequence spans 155 residues: Mitochondrial import protein 1 (155 aa).

Belongs to the MIM1 family.

It is found in the mitochondrion outer membrane. Required for the assembly of the TOM (translocase of outer membrane) receptor complex, which is responsible for the recognition and translocation of cytosolically synthesized mitochondrial preproteins. The sequence is that of Mitochondrial import protein 1 from Eremothecium gossypii (strain ATCC 10895 / CBS 109.51 / FGSC 9923 / NRRL Y-1056) (Yeast).